A 652-amino-acid polypeptide reads, in one-letter code: NAD(P)H-quinone oxidoreductase subunit 5, chloroplastic (652 aa).

A run of 16 helical transmembrane segments spans residues 9–29, 40–60, 91–111, 124–144, 147–167, 188–208, 225–245, 258–278, 289–309, 327–347, 354–374, 395–415, 424–444, 482–502, 526–546, and 630–650; these read WLIP…LISF, YSFL…LILF, PLTA…LIYT, FFAY…SPNL, IYVF…FWFT, GLLL…FDVI, LAIF…AQFP, TPIS…FLVA, FLMD…ATIA, LGYM…FHLM, ALLF…VGFN, GNAF…ACFW, AFVH…LTSF, TLPL…GTPF, LFIA…AYLI, and ILMI…YYSL.

The protein belongs to the complex I subunit 5 family. As to quaternary structure, NDH is composed of at least 16 different subunits, 5 of which are encoded in the nucleus.

The protein resides in the plastid. Its subcellular location is the chloroplast thylakoid membrane. The enzyme catalyses a plastoquinone + NADH + (n+1) H(+)(in) = a plastoquinol + NAD(+) + n H(+)(out). It carries out the reaction a plastoquinone + NADPH + (n+1) H(+)(in) = a plastoquinol + NADP(+) + n H(+)(out). Functionally, NDH shuttles electrons from NAD(P)H:plastoquinone, via FMN and iron-sulfur (Fe-S) centers, to quinones in the photosynthetic chain and possibly in a chloroplast respiratory chain. The immediate electron acceptor for the enzyme in this species is believed to be plastoquinone. Couples the redox reaction to proton translocation, and thus conserves the redox energy in a proton gradient. This chain is NAD(P)H-quinone oxidoreductase subunit 5, chloroplastic (ndhF), found in Mesostigma viride (Green alga).